Here is a 320-residue protein sequence, read N- to C-terminus: Cytochrome f (320 aa).

The first 35 residues, 1-35 (MEKRNTYDWVTRWVIASFSILTISYMITWTSISNA), serve as a signal peptide directing secretion. Heme-binding residues include Tyr36, Cys56, Cys59, and His60. Residues 286 to 306 (IQGLLVFLASVVLAQIFLVLK) traverse the membrane as a helical segment.

The protein belongs to the cytochrome f family. The 4 large subunits of the cytochrome b6-f complex are cytochrome b6, subunit IV (17 kDa polypeptide, petD), cytochrome f and the Rieske protein, while the 4 small subunits are PetG, PetL, PetM and PetN. The complex functions as a dimer. Requires heme as cofactor.

It is found in the plastid. Its subcellular location is the chloroplast thylakoid membrane. Component of the cytochrome b6-f complex, which mediates electron transfer between photosystem II (PSII) and photosystem I (PSI), cyclic electron flow around PSI, and state transitions. The chain is Cytochrome f from Welwitschia mirabilis (Tree tumbo).